We begin with the raw amino-acid sequence, 235 residues long: Pyridoxine 5'-phosphate synthase (235 aa).

Asn6 lines the 3-amino-2-oxopropyl phosphate pocket. Position 8 to 9 (8 to 9 (DH)) interacts with 1-deoxy-D-xylulose 5-phosphate. Position 17 (Arg17) interacts with 3-amino-2-oxopropyl phosphate. His42 acts as the Proton acceptor in catalysis. 1-deoxy-D-xylulose 5-phosphate-binding residues include Arg44 and His49. Glu69 functions as the Proton acceptor in the catalytic mechanism. A 1-deoxy-D-xylulose 5-phosphate-binding site is contributed by Thr99. The active-site Proton donor is the His189. 3-amino-2-oxopropyl phosphate is bound by residues Gly190 and 211 to 212 (GH).

It belongs to the PNP synthase family. In terms of assembly, homooctamer; tetramer of dimers.

The protein localises to the cytoplasm. It catalyses the reaction 3-amino-2-oxopropyl phosphate + 1-deoxy-D-xylulose 5-phosphate = pyridoxine 5'-phosphate + phosphate + 2 H2O + H(+). The protein operates within cofactor biosynthesis; pyridoxine 5'-phosphate biosynthesis; pyridoxine 5'-phosphate from D-erythrose 4-phosphate: step 5/5. In terms of biological role, catalyzes the complicated ring closure reaction between the two acyclic compounds 1-deoxy-D-xylulose-5-phosphate (DXP) and 3-amino-2-oxopropyl phosphate (1-amino-acetone-3-phosphate or AAP) to form pyridoxine 5'-phosphate (PNP) and inorganic phosphate. The polypeptide is Pyridoxine 5'-phosphate synthase (Chlorobium phaeovibrioides (strain DSM 265 / 1930) (Prosthecochloris vibrioformis (strain DSM 265))).